A 364-amino-acid chain; its full sequence is Chorismate synthase (364 aa).

Position 48 (R48) interacts with NADP(+). FMN contacts are provided by residues 131–133, 243–244, G288, 303–307, and R329; these read RAS, NA, and KPTSS.

This sequence belongs to the chorismate synthase family. As to quaternary structure, homotetramer. Requires FMNH2 as cofactor.

The enzyme catalyses 5-O-(1-carboxyvinyl)-3-phosphoshikimate = chorismate + phosphate. It functions in the pathway metabolic intermediate biosynthesis; chorismate biosynthesis; chorismate from D-erythrose 4-phosphate and phosphoenolpyruvate: step 7/7. Its function is as follows. Catalyzes the anti-1,4-elimination of the C-3 phosphate and the C-6 proR hydrogen from 5-enolpyruvylshikimate-3-phosphate (EPSP) to yield chorismate, which is the branch point compound that serves as the starting substrate for the three terminal pathways of aromatic amino acid biosynthesis. This reaction introduces a second double bond into the aromatic ring system. This Bartonella bacilliformis (strain ATCC 35685 / KC583 / Herrer 020/F12,63) protein is Chorismate synthase.